A 511-amino-acid chain; its full sequence is Arabinose import ATP-binding protein AraG (511 aa).

ABC transporter domains are found at residues 5–240 (LEFR…MVGR) and 240–501 (RQID…LRPR). 37-44 (GENGAGKS) lines the ATP pocket.

This sequence belongs to the ABC transporter superfamily. Arabinose importer (TC 3.A.1.2.2) family. As to quaternary structure, the complex is composed of two ATP-binding proteins (AraG), two transmembrane proteins (AraH) and a solute-binding protein (AraF).

The protein resides in the cell inner membrane. The enzyme catalyses L-arabinose(out) + ATP + H2O = L-arabinose(in) + ADP + phosphate + H(+). Part of the ABC transporter complex AraFGH involved in arabinose import. Responsible for energy coupling to the transport system. The polypeptide is Arabinose import ATP-binding protein AraG (Ralstonia nicotianae (strain ATCC BAA-1114 / GMI1000) (Ralstonia solanacearum)).